A 62-amino-acid chain; its full sequence is Cytotoxin-like basic protein (62 aa).

Disulfide bonds link Cys-3–Cys-22, Cys-15–Cys-40, Cys-44–Cys-55, and Cys-56–Cys-61.

Belongs to the three-finger toxin family. Short-chain subfamily. Orphan group XV sub-subfamily. As to expression, expressed by the venom gland.

Its subcellular location is the secreted. It localises to the target cell membrane. Its function is as follows. Has low cytotoxic activity. The polypeptide is Cytotoxin-like basic protein (Naja naja (Indian cobra)).